Reading from the N-terminus, the 62-residue chain is UPF0291 protein CLB_2550 (62 aa).

This sequence belongs to the UPF0291 family.

Its subcellular location is the cytoplasm. This Clostridium botulinum (strain ATCC 19397 / Type A) protein is UPF0291 protein CLB_2550.